The sequence spans 235 residues: MSLEIDAKAVSALLLGQGCANNLKTLLKNHETGSVSTEPLINSILDSFSFALSSQNIPRHVSQRSSKKKMCGIQGMEDSPTPAHIDGFIWRKYGQKTIKTSPHQRWYYRCAYAKDQNCDATKRVQKIQDNPPVYRNTYVGQHACEAPAYAVNNGGTYGSKMIKFDYVIPESVMPQPLSIDSQEITMEDKDTDDHILNYINEHLMEDEAYDVFPDVLGERCCFGLEPFPGLNINKS.

A DNA-binding region (WRKY) is located at residues S79–P147.

Belongs to the WRKY group III family.

Its subcellular location is the nucleus. Its function is as follows. Transcription factor. Interacts specifically with the W box (5'-(T)TGAC[CT]-3'), a frequently occurring elicitor-responsive cis-acting element. The polypeptide is Probable WRKY transcription factor 66 (WRKY66) (Arabidopsis thaliana (Mouse-ear cress)).